We begin with the raw amino-acid sequence, 171 residues long: RNA pyrophosphohydrolase (171 aa).

A Nudix hydrolase domain is found at 6 to 149; the sequence is GFRPNVGIIL…KREVYRRALK (144 aa). The Nudix box motif lies at 39-60; the sequence is GGIKESESAEQALYRELQEEVG.

This sequence belongs to the Nudix hydrolase family. RppH subfamily. Requires a divalent metal cation as cofactor.

In terms of biological role, accelerates the degradation of transcripts by removing pyrophosphate from the 5'-end of triphosphorylated RNA, leading to a more labile monophosphorylated state that can stimulate subsequent ribonuclease cleavage. In Teredinibacter turnerae (strain ATCC 39867 / T7901), this protein is RNA pyrophosphohydrolase.